Here is a 460-residue protein sequence, read N- to C-terminus: V-type ATP synthase beta chain (460 aa).

Belongs to the ATPase alpha/beta chains family.

Produces ATP from ADP in the presence of a proton gradient across the membrane. The V-type beta chain is a regulatory subunit. The protein is V-type ATP synthase beta chain of Acetivibrio thermocellus (strain ATCC 27405 / DSM 1237 / JCM 9322 / NBRC 103400 / NCIMB 10682 / NRRL B-4536 / VPI 7372) (Clostridium thermocellum).